Consider the following 446-residue polypeptide: Bifunctional protein GlmU (446 aa).

A pyrophosphorylase region spans residues 1–225 (MEGIILAAGK…ETEVYGVNDR (225 aa)). UDP-N-acetyl-alpha-D-glucosamine contacts are provided by residues 6 to 9 (LAAG), Lys20, Gln70, and 75 to 76 (GT). Asp98 contacts Mg(2+). Residues Gly135, Glu150, Asn165, and Asn223 each coordinate UDP-N-acetyl-alpha-D-glucosamine. Asn223 lines the Mg(2+) pocket. The tract at residues 226–246 (VQLARLTKGVYRRKAEALMQE) is linker. The tract at residues 247 to 446 (GVTIIDPETV…RQVNKEDYVK (200 aa)) is N-acetyltransferase. UDP-N-acetyl-alpha-D-glucosamine is bound by residues Arg328 and Lys346. The active-site Proton acceptor is His358. The UDP-N-acetyl-alpha-D-glucosamine site is built by Tyr361 and Asn372. Acetyl-CoA is bound by residues Ala375, 381–382 (NY), Ser400, Ala418, and Arg435.

The protein in the N-terminal section; belongs to the N-acetylglucosamine-1-phosphate uridyltransferase family. It in the C-terminal section; belongs to the transferase hexapeptide repeat family. Homotrimer. Mg(2+) serves as cofactor.

The protein resides in the cytoplasm. The catalysed reaction is alpha-D-glucosamine 1-phosphate + acetyl-CoA = N-acetyl-alpha-D-glucosamine 1-phosphate + CoA + H(+). It carries out the reaction N-acetyl-alpha-D-glucosamine 1-phosphate + UTP + H(+) = UDP-N-acetyl-alpha-D-glucosamine + diphosphate. The protein operates within nucleotide-sugar biosynthesis; UDP-N-acetyl-alpha-D-glucosamine biosynthesis; N-acetyl-alpha-D-glucosamine 1-phosphate from alpha-D-glucosamine 6-phosphate (route II): step 2/2. It functions in the pathway nucleotide-sugar biosynthesis; UDP-N-acetyl-alpha-D-glucosamine biosynthesis; UDP-N-acetyl-alpha-D-glucosamine from N-acetyl-alpha-D-glucosamine 1-phosphate: step 1/1. It participates in bacterial outer membrane biogenesis; LPS lipid A biosynthesis. In terms of biological role, catalyzes the last two sequential reactions in the de novo biosynthetic pathway for UDP-N-acetylglucosamine (UDP-GlcNAc). The C-terminal domain catalyzes the transfer of acetyl group from acetyl coenzyme A to glucosamine-1-phosphate (GlcN-1-P) to produce N-acetylglucosamine-1-phosphate (GlcNAc-1-P), which is converted into UDP-GlcNAc by the transfer of uridine 5-monophosphate (from uridine 5-triphosphate), a reaction catalyzed by the N-terminal domain. In Carboxydothermus hydrogenoformans (strain ATCC BAA-161 / DSM 6008 / Z-2901), this protein is Bifunctional protein GlmU.